The following is a 463-amino-acid chain: MDVFTQYAYNDSIFDNGTWSANETTKDETHPYNYYAMLLTLLIFVIVFGNVLVCMAVSREKALQTTTNYLIVSLAVADLLVATLVMPWVVYLEVVGEWRFSKIHCDIFVTLDVMMCTASILNLCAISIDRYTAVAMPMLYNTRYSSRRRVTVMISVVWVLSFAISCPLLFGLNNTATRDQSLCFIANPAFVVYSSIVSFYVPFIVTLLVYVQIYVVLRKRRKRVNTKPKQRLCQAADPDIPTSLKDKCTHPEDVRLCTMIVKSNGSFPVNKKKVIFIKDGVNEVEGLELDELNYCGGSHKQPPPQQQPRALGDTPATSHQLLMSTKANASPTSTPPTPPEEGQRTEKNGDPTKEAQGNPAPVVALRNGKTQTSLKTLSKRKISQQKEKKATQMLAIVLGVFIICWLPFFITHILNTHCTRCKVPAEMYNAFTWLGYVNSAVNPIIYTTFNVEFRKAFIKILHC.

Residues 1–35 are Extracellular-facing; that stretch reads MDVFTQYAYNDSIFDNGTWSANETTKDETHPYNYY. Residues Asn10, Asn16, and Asn22 are each glycosylated (N-linked (GlcNAc...) asparagine). Residues 36–58 traverse the membrane as a helical segment; that stretch reads AMLLTLLIFVIVFGNVLVCMAVS. The Cytoplasmic segment spans residues 59-68; the sequence is REKALQTTTN. A helical membrane pass occupies residues 69-91; the sequence is YLIVSLAVADLLVATLVMPWVVY. Residues 92–106 are Extracellular-facing; that stretch reads LEVVGEWRFSKIHCD. Cys105 and Cys183 are joined by a disulfide. The chain crosses the membrane as a helical span at residues 107-128; that stretch reads IFVTLDVMMCTASILNLCAISI. Residues 129-149 are Cytoplasmic-facing; it reads DRYTAVAMPMLYNTRYSSRRR. A helical membrane pass occupies residues 150–170; the sequence is VTVMISVVWVLSFAISCPLLF. Residues 171 to 189 lie on the Extracellular side of the membrane; that stretch reads GLNNTATRDQSLCFIANPA. Residues 190–214 form a helical membrane-spanning segment; the sequence is FVVYSSIVSFYVPFIVTLLVYVQIY. Topologically, residues 215–392 are cytoplasmic; that stretch reads VVLRKRRKRV…SQQKEKKATQ (178 aa). The interval 295 to 362 is disordered; the sequence is CGGSHKQPPP…KEAQGNPAPV (68 aa). Residues 315–329 show a composition bias toward polar residues; sequence PATSHQLLMSTKANA. Residues 341-353 show a composition bias toward basic and acidic residues; the sequence is EGQRTEKNGDPTK. A helical membrane pass occupies residues 393 to 414; that stretch reads MLAIVLGVFIICWLPFFITHIL. Residues 415–429 are Extracellular-facing; the sequence is NTHCTRCKVPAEMYN. Cys418 and Cys421 are joined by a disulfide. A helical membrane pass occupies residues 430-451; it reads AFTWLGYVNSAVNPIIYTTFNV. Residues 452–463 lie on the Cytoplasmic side of the membrane; the sequence is EFRKAFIKILHC.

This sequence belongs to the G-protein coupled receptor 1 family.

The protein localises to the cell membrane. In terms of biological role, receptor for dopamine. In Takifugu rubripes (Japanese pufferfish), this protein is D(2)-like dopamine receptor (d215).